Consider the following 220-residue polypeptide: Putative 3-methyladenine DNA glycosylase (220 aa).

Belongs to the DNA glycosylase MPG family.

This is Putative 3-methyladenine DNA glycosylase from Rickettsia bellii (strain RML369-C).